The chain runs to 152 residues: Ribosome maturation factor RimP (152 aa).

This sequence belongs to the RimP family.

It is found in the cytoplasm. In terms of biological role, required for maturation of 30S ribosomal subunits. The sequence is that of Ribosome maturation factor RimP from Paraburkholderia phymatum (strain DSM 17167 / CIP 108236 / LMG 21445 / STM815) (Burkholderia phymatum).